The following is a 244-amino-acid chain: U4/U6.U5 tri-snRNP-associated protein 3-like protein C162.01c (244 aa).

2 stretches are compositionally biased toward basic and acidic residues: residues 1 to 11 (MSSSRSGEHRR) and 20 to 116 (ESSR…RRDG). Disordered regions lie at residues 1–192 (MSSS…EDEA) and 223–244 (KKTK…LDNE). Phosphoserine occurs at positions 121 and 140. Residues 126-182 (GLERKREHEKLQAPSPKEEEERPVDQGDKMDGVKEDKDGSLEVGKSHDAMTRTKSAE) show a composition bias toward basic and acidic residues. Residues 183–192 (EEIVEQEDEA) show a composition bias toward acidic residues.

The protein belongs to the SNUT3 family. In terms of assembly, part of a tri-snRNP complex.

The protein localises to the nucleus. In terms of biological role, may play a role in mRNA splicing. This is U4/U6.U5 tri-snRNP-associated protein 3-like protein C162.01c from Schizosaccharomyces pombe (strain 972 / ATCC 24843) (Fission yeast).